Here is a 185-residue protein sequence, read N- to C-terminus: Elongation factor P (185 aa).

The protein belongs to the elongation factor P family.

Its subcellular location is the cytoplasm. Its pathway is protein biosynthesis; polypeptide chain elongation. In terms of biological role, involved in peptide bond synthesis. Stimulates efficient translation and peptide-bond synthesis on native or reconstituted 70S ribosomes in vitro. Probably functions indirectly by altering the affinity of the ribosome for aminoacyl-tRNA, thus increasing their reactivity as acceptors for peptidyl transferase. In Aromatoleum aromaticum (strain DSM 19018 / LMG 30748 / EbN1) (Azoarcus sp. (strain EbN1)), this protein is Elongation factor P.